The following is a 185-amino-acid chain: Ribosome-recycling factor (185 aa).

A disordered region spans residues 142–165 (IVKDGDAGEDEGSRAEKELDGLTK).

Belongs to the RRF family.

It localises to the cytoplasm. Functionally, responsible for the release of ribosomes from messenger RNA at the termination of protein biosynthesis. May increase the efficiency of translation by recycling ribosomes from one round of translation to another. The polypeptide is Ribosome-recycling factor (Renibacterium salmoninarum (strain ATCC 33209 / DSM 20767 / JCM 11484 / NBRC 15589 / NCIMB 2235)).